Reading from the N-terminus, the 580-residue chain is Probable inactive 1-aminocyclopropane-1-carboxylate synthase-like protein 2 (580 aa).

The segment at 1–43 (MSENRNEGSSQAAKANSDTQTPSHFKVTHPRLRDQLKKKSSKK) is disordered. Polar residues predominate over residues 7–23 (EGSSQAAKANSDTQTPS). Lys-417 carries the N6-(pyridoxal phosphate)lysine modification.

This sequence belongs to the class-I pyridoxal-phosphate-dependent aminotransferase family.

This chain is Probable inactive 1-aminocyclopropane-1-carboxylate synthase-like protein 2 (Accsl), found in Mus musculus (Mouse).